Here is a 415-residue protein sequence, read N- to C-terminus: SVF1-like protein YDR222W (415 aa).

The protein belongs to the SVF1 family.

The protein localises to the cytoplasm. The protein is SVF1-like protein YDR222W of Saccharomyces cerevisiae (strain ATCC 204508 / S288c) (Baker's yeast).